We begin with the raw amino-acid sequence, 77 residues long: Protein RALF-like 17 (77 aa).

Residues 1–29 form the signal peptide; that stretch reads MAASREFIICCFLTLLLCNFFMRVESGAA. An intrachain disulfide couples C37 to C51.

The protein belongs to the plant rapid alkalinization factor (RALF) family.

It localises to the secreted. Functionally, cell signaling peptide that may regulate plant stress, growth, and development. Mediates a rapid alkalinization of extracellular space by mediating a transient increase in the cytoplasmic Ca(2+) concentration leading to a calcium-dependent signaling events through a cell surface receptor and a concomitant activation of some intracellular mitogen-activated protein kinases. The protein is Protein RALF-like 17 (RALFL17) of Arabidopsis thaliana (Mouse-ear cress).